Here is a 565-residue protein sequence, read N- to C-terminus: Carboxylesterase 1D (565 aa).

Positions 1–18 (MRLYPLVWLFLAACTAWG) are cleaved as a signal peptide. N-linked (GlcNAc...) asparagine glycosylation is present at asparagine 79. Residues cysteine 87 and cysteine 116 are joined by a disulfide bond. Serine 221 functions as the Acyl-ester intermediate in the catalytic mechanism. Cysteines 273 and 284 form a disulfide. Catalysis depends on glutamate 353, which acts as the Charge relay system. Position 382 is an N6-succinyllysine (lysine 382). Histidine 466 (charge relay system) is an active-site residue. A glycan (N-linked (GlcNAc...) asparagine) is linked at asparagine 489. Positions 562–565 (HVEL) match the Prevents secretion from ER motif.

The protein belongs to the type-B carboxylesterase/lipase family. In terms of assembly, homotrimer. In terms of tissue distribution, detected in liver, lung and testis, but not in kidney (at protein level).

It localises to the endoplasmic reticulum lumen. It is found in the cytoplasm. The protein localises to the cytosol. Its subcellular location is the lipid droplet. The protein resides in the microsome. The catalysed reaction is all-trans-retinyl hexadecanoate + H2O = all-trans-retinol + hexadecanoate + H(+). It catalyses the reaction a carboxylic ester + H2O = an alcohol + a carboxylate + H(+). It carries out the reaction a long-chain fatty acyl ethyl ester + H2O = a long-chain fatty acid + ethanol + H(+). With respect to regulation, FAEE-synthesizing and PNPB-hydrolyzing activities are both inhibited by DFP. Major lipase in white adipose tissue. Involved in the metabolism of xenobiotics and of natural substrates. Hydrolyzes triacylglycerols and monoacylglycerols, with a preference for monoacylglycerols. The susceptibility of the substrate increases with decreasing acyl chain length of the fatty acid moiety. Catalyzes the synthesis of fatty acid ethyl esters. Hydrolyzes retinyl esters. This chain is Carboxylesterase 1D, found in Rattus norvegicus (Rat).